Reading from the N-terminus, the 244-residue chain is Probable ABC transporter ATP-binding protein in ycf23-apcF intergenic region (244 aa).

Positions 9–241 constitute an ABC transporter domain; it reads LEINNLTVSY…KLSTLFGEHI (233 aa). 41–48 lines the ATP pocket; the sequence is GPNGAGKS.

Belongs to the ABC transporter superfamily.

It is found in the plastid. The protein localises to the cyanelle. This Cyanophora paradoxa protein is Probable ABC transporter ATP-binding protein in ycf23-apcF intergenic region.